Consider the following 734-residue polypeptide: Photosystem I P700 chlorophyll a apoprotein A2 (734 aa).

The next 8 helical transmembrane spans lie at 46-69 (IFAS…FHVA), 135-158 (LYTG…LHLQ), 175-199 (LNHH…HVAI), 273-291 (MAHH…GHMY), 330-353 (IHFQ…QHMY), 369-395 (AALY…IFFI), 417-439 (AIIS…LYVH), and 517-535 (FLVH…LILV). Residues Cys559 and Cys568 each contribute to the [4Fe-4S] cluster site. 2 helical membrane passes run 575–596 (AFYL…YWHW) and 643–665 (LSVW…MFLI). Chlorophyll a contacts are provided by His654, Met662, and Tyr670. Phylloquinone is bound at residue Trp671. The helical transmembrane segment at 707–727 (LVGLAHFSVGYIFTYAAFLIA) threads the bilayer.

This sequence belongs to the PsaA/PsaB family. As to quaternary structure, the PsaA/B heterodimer binds the P700 chlorophyll special pair and subsequent electron acceptors. PSI consists of a core antenna complex that captures photons, and an electron transfer chain that converts photonic excitation into a charge separation. The eukaryotic PSI reaction center is composed of at least 11 subunits. P700 is a chlorophyll a/chlorophyll a' dimer, A0 is one or more chlorophyll a, A1 is one or both phylloquinones and FX is a shared 4Fe-4S iron-sulfur center. is required as a cofactor.

The protein resides in the plastid. It is found in the chloroplast thylakoid membrane. It carries out the reaction reduced [plastocyanin] + hnu + oxidized [2Fe-2S]-[ferredoxin] = oxidized [plastocyanin] + reduced [2Fe-2S]-[ferredoxin]. Functionally, psaA and PsaB bind P700, the primary electron donor of photosystem I (PSI), as well as the electron acceptors A0, A1 and FX. PSI is a plastocyanin-ferredoxin oxidoreductase, converting photonic excitation into a charge separation, which transfers an electron from the donor P700 chlorophyll pair to the spectroscopically characterized acceptors A0, A1, FX, FA and FB in turn. Oxidized P700 is reduced on the lumenal side of the thylakoid membrane by plastocyanin. This is Photosystem I P700 chlorophyll a apoprotein A2 from Lepidium virginicum (Virginia pepperweed).